The sequence spans 230 residues: Cytidylate kinase (230 aa).

16 to 24 (GPASAGKST) is a binding site for ATP.

Belongs to the cytidylate kinase family. Type 1 subfamily.

It localises to the cytoplasm. The catalysed reaction is CMP + ATP = CDP + ADP. It catalyses the reaction dCMP + ATP = dCDP + ADP. The protein is Cytidylate kinase of Lactobacillus gasseri (strain ATCC 33323 / DSM 20243 / BCRC 14619 / CIP 102991 / JCM 1131 / KCTC 3163 / NCIMB 11718 / NCTC 13722 / AM63).